We begin with the raw amino-acid sequence, 58 residues long: Alpha-conotoxin-like Pu1.6 (58 aa).

The first 17 residues, 1-17 (MFTVFLLVVLVTTVVFS), serve as a signal peptide directing secretion. The propeptide occupies 18 to 35 (TSDHRPASNHENRRASKR). 2 disulfides stabilise this stretch: C44–C50 and C45–C58. Positions 46–48 (TNP) are lacks the Ser-Xaa-Pro motif that is crucial for potent interaction with nAChR.

It belongs to the conotoxin A superfamily. In terms of tissue distribution, expressed by the venom duct.

The protein resides in the secreted. In terms of biological role, alpha-conotoxins act on postsynaptic membranes, they bind to the nicotinic acetylcholine receptors (nAChR) and thus inhibit them. Has possibly a distinct nAChR binding mode from other alpha-conotoxins, due to a different three residue motif (lacks the Ser-Xaa-Pro motif). The protein is Alpha-conotoxin-like Pu1.6 of Conus pulicarius (Flea-bitten cone).